A 1150-amino-acid chain; its full sequence is MGFLGVYSAVYDYVPAGEGELTIKEGDILYVLEKSTEDDWWKAKKKASAEDEDEPVGLIPNNYIQEAAPSGKARALYDYTRQTDEELSFTEDAQLEVFDTSDPDWILVGFEGEYGFVPANYIELSEEEQHKEAPAPSLPSRPRPASVPVEEEAPAAPQSPLSPQPAETPVATPAAAIAGILKQRQASAPAARAPPEFTPEASDEEPPTPTLPARPVSQVSVPQPTRGQEHDREREPARRYSPRLPASPVVTASPPHNRVSFSTMGVVNDVDEHKAARAPGGFHMYNISEMVHVMGKKKKMPTTLGINIATGTILIAPEQARDGPEQTWTAEKMTHYSLEGKHVFMELVRPSKSIDFHAGAKDTATEIVSALGELAGAARAEGLREVIAAGSGSGQKRGQVLYDFVAQGDDEVDVNVGDEVVIIDDVKSEEWWMVRRVKNAKEGVVPSSYIEIMGAIQSASSAGINAGRSTVEQNRLEEARLAREALKTAKKDEVEVGPGMRLPERGSSLFARDNGNQSGEQKRRESVRESGQSRSSKSKPDPAKVRTWTDRSKSFSVEAQFLALKDGKINLHKMNGVKIAVPVVKMSVEDLEYVERMTGISLDEDKPLSDIKKQQKSRAAERDSSNGASPAPGPSASMGAGASIQTPEYDWFQFFLSCDVNVGLCERYAQAFKRDSMDESVLPDIDATVLRNLGIREGDIIKIIRFLDKKYMRKDGKRNVSFGGEDEGEAGLFSGPGGALKNNTRKGRPAPAVQTNDVVDANAFSQNGTEKSSPQGVATPLANAPTPAEKDVKREGFDDDAWDVKPSKQETTSSPPAQSIPAAAPQQPVITGSMQELSLLSTPLEPVKAQPTAQASPQPQAPPAVTPSIFAGIGNQQTGVPQPQPLPSGPLLPANLARQRPAPPQMTANSTLIPPLPPSRPLSAPQAASAYAPPPLQAQATGYGAFQPQIAPPGQSLHDLNQQRMQQQQQQQMQQQQFMLQQQQQAGMMQQPTGFNQFNPGVPNNFQQFPMQTGNPQQPFIPNQTGTPFANPPAQPFQPQPLQAQPTGFQSAFPPGQQYPQPTGVNSYLPPALQPQPTGMMNGANGFNQNFTPPPIPPMPQQQPAPMLPQATGPAPPVRFGVNGTNNIAPQPTGRRANLAQATPQNPFGF.

SH3 domains lie at 2–69 (GFLG…EAAP) and 70–127 (SGKA…LSEE). Disordered stretches follow at residues 127-170 (EEQH…ETPV) and 183-257 (QRQA…PPHN). 2 stretches are compositionally biased toward low complexity: residues 143-170 (RPAS…ETPV) and 183-195 (QRQA…RAPP). A compositionally biased stretch (polar residues) spans 217-226 (SQVSVPQPTR). Basic and acidic residues predominate over residues 227–238 (GQEHDREREPAR). Residues 393 to 455 (SGQKRGQVLY…PSSYIEIMGA (63 aa)) enclose the SH3 3 domain. Disordered regions lie at residues 490–547 (KKDE…KVRT), 605–640 (DKPL…SMGA), 722–827 (FGGE…APQQ), 846–930 (PVKA…AASA), 1026–1060 (GTPF…QQYP), and 1101–1150 (QQQP…PFGF). Basic and acidic residues-rich tracts occupy residues 538-547 (SKPDPAKVRT) and 605-624 (DKPL…ERDS). Over residues 625-640 (SNGASPAPGPSASMGA) the composition is skewed to low complexity. Residues 753 to 776 (VQTNDVVDANAFSQNGTEKSSPQG) are compositionally biased toward polar residues. Residues 788-808 (AEKDVKREGFDDDAWDVKPSK) are compositionally biased toward basic and acidic residues. 3 stretches are compositionally biased toward low complexity: residues 813–827 (SSPP…APQQ), 849–858 (AQPTAQASPQ), and 921–930 (PLSAPQAASA). The segment covering 1030-1039 (ANPPAQPFQP) has biased composition (pro residues). The span at 1140-1150 (AQATPQNPFGF) shows a compositional bias: polar residues.

Belongs to the SLA1 family. Component of the PAN1 actin cytoskeleton-regulatory complex.

It is found in the cell membrane. The protein resides in the endosome membrane. The protein localises to the cytoplasm. It localises to the cytoskeleton. Its subcellular location is the actin patch. Its function is as follows. Component of the PAN1 actin cytoskeleton-regulatory complex required for the internalization of endosomes during actin-coupled endocytosis. The complex links the site of endocytosis to the cell membrane-associated actin cytoskeleton. Mediates uptake of external molecules and vacuolar degradation of plasma membrane proteins. Plays a role in the proper organization of the cell membrane-associated actin cytoskeleton and promotes its destabilization. The polypeptide is Actin cytoskeleton-regulatory complex protein sla1 (sla1) (Sclerotinia sclerotiorum (strain ATCC 18683 / 1980 / Ss-1) (White mold)).